The chain runs to 712 residues: MSSAVLSPDRYINRELSWIAFNQRVLAQALDQRTPLLDQAKFSAIFSNNLDEFFMVRVASLKSQVEAGITTPSEDGKTPLEQLLTIRERLIPLLQQQQDHYRKQLRKKLLDHNVQLLDYSQLNKHQQQWVSDTFRHSVFPVLTPLAVDPAHPFPFVSNLSLNVAAVIHDPESGQRQFARVKVPQKNLPRFVSIPTELSESDPKPIHTAVPLEQVIAFNLDLLFPGMSVQGHYFFRVTRDADLELRDLEADDLMLALEQGLRKRRMGGEVVRLEVPNDMPEDVVEMLMNGLAVEEEDLYRIDGPLGLDDLFGLMALPLPKLKDKQHSGQTPTVLARTQQHLIDEGAIKPEEFESIFSVMRQQDILLHHPYDLFSTTVEEFINQAADDPQVMGIKMTLYRTSKDSPIIAALIRAAENGKQVMALVELKARFDEDNNIQWARQLERSGVHVVYGVLGLKTHTKIVLVVRKEQEKLRSYVHIGTGNYNSKTSKLYTDLGLLSTRPELGQDLVELFNYLTGFSKQQSFRRLLVAPVTLRKGMESLIRREIEHAREGRDGHIRAKMNSLVDPDIIALLYEAAAANVRVELIIRGMCSLYPGREGLSESISVVSIIGQFLEHSRIFWFGNGGSPEVYIGSADWMSRNLDRRVEAVTPVEDPNLRGRLERLLELYLKDNRGAWDMQSDGSFIQRQPEDGEDVRNSQVQLIKQWSQGVPQS.

Residue Asn-49 participates in ATP binding. Arg-398 and Arg-428 together coordinate Mg(2+). The active-site Phosphohistidine intermediate is His-458. Residues Tyr-491, Arg-587, and His-615 each coordinate ATP.

The protein belongs to the polyphosphate kinase 1 (PPK1) family. The cofactor is Mg(2+). An intermediate of this reaction is the autophosphorylated ppk in which a phosphate is covalently linked to a histidine residue through a N-P bond.

It carries out the reaction [phosphate](n) + ATP = [phosphate](n+1) + ADP. Catalyzes the reversible transfer of the terminal phosphate of ATP to form a long-chain polyphosphate (polyP). In Parasynechococcus marenigrum (strain WH8102), this protein is Polyphosphate kinase.